The sequence spans 502 residues: Glycerol kinase (502 aa).

Residue Thr14 coordinates ADP. Residues Thr14, Thr15, and Ser16 each contribute to the ATP site. Sn-glycerol 3-phosphate is bound at residue Thr14. Arg18 contacts ADP. Residues Arg84, Glu85, and Tyr136 each contribute to the sn-glycerol 3-phosphate site. Arg84, Glu85, and Tyr136 together coordinate glycerol. His232 is subject to Phosphohistidine; by HPr. Residue Asp246 participates in sn-glycerol 3-phosphate binding. Glycerol-binding residues include Asp246 and Gln247. Thr268 and Gly311 together coordinate ADP. Positions 268, 311, 315, and 412 each coordinate ATP. ADP contacts are provided by Gly412 and Asn416.

This sequence belongs to the FGGY kinase family. In terms of assembly, homotetramer and homodimer (in equilibrium). Post-translationally, the phosphoenolpyruvate-dependent sugar phosphotransferase system (PTS), including enzyme I, and histidine-containing protein (HPr) are required for the phosphorylation, which leads to the activation of the enzyme.

It carries out the reaction glycerol + ATP = sn-glycerol 3-phosphate + ADP + H(+). It functions in the pathway polyol metabolism; glycerol degradation via glycerol kinase pathway; sn-glycerol 3-phosphate from glycerol: step 1/1. With respect to regulation, activated by phosphorylation and inhibited by fructose 1,6-bisphosphate (FBP). Functionally, key enzyme in the regulation of glycerol uptake and metabolism. Catalyzes the phosphorylation of glycerol to yield sn-glycerol 3-phosphate. In Streptococcus pneumoniae serotype 19F (strain G54), this protein is Glycerol kinase.